The chain runs to 104 residues: Inner membrane protein YjeO (104 aa).

At 1-5 (MSARM) the chain is on the cytoplasmic side. Residues 6-26 (FVLCCIWFIVAFLWITITSAL) traverse the membrane as a helical segment. Topologically, residues 27–52 (DKEWMIDGRGINNVCDVLMYLEEDDT) are periplasmic. A helical membrane pass occupies residues 53–73 (RDVGVIMTLPLFFPFLWFALW). Topologically, residues 74–77 (RKKR) are cytoplasmic. The helical transmembrane segment at 78–98 (GWFMYATALAIFGYWLWQFFL) threads the bilayer. Residues 99-104 (RYQFCL) are Periplasmic-facing.

Its subcellular location is the cell inner membrane. The chain is Inner membrane protein YjeO (yjeO) from Escherichia coli (strain K12).